The sequence spans 241 residues: 1-(5-phosphoribosyl)-5-[(5-phosphoribosylamino)methylideneamino] imidazole-4-carboxamide isomerase (241 aa).

D7 functions as the Proton acceptor in the catalytic mechanism. The active-site Proton donor is D129.

Belongs to the HisA/HisF family.

The protein resides in the cytoplasm. It catalyses the reaction 1-(5-phospho-beta-D-ribosyl)-5-[(5-phospho-beta-D-ribosylamino)methylideneamino]imidazole-4-carboxamide = 5-[(5-phospho-1-deoxy-D-ribulos-1-ylimino)methylamino]-1-(5-phospho-beta-D-ribosyl)imidazole-4-carboxamide. The protein operates within amino-acid biosynthesis; L-histidine biosynthesis; L-histidine from 5-phospho-alpha-D-ribose 1-diphosphate: step 4/9. The protein is 1-(5-phosphoribosyl)-5-[(5-phosphoribosylamino)methylideneamino] imidazole-4-carboxamide isomerase of Buchnera aphidicola subsp. Baizongia pistaciae (strain Bp).